The following is a 552-amino-acid chain: ATP synthase subunit alpha, mitochondrial (552 aa).

A mitochondrion-targeting transit peptide spans 1–47; that stretch reads MSIFSARLASSVARNLPKAANQVACKAAYPAASLAARKLHVASTQRS. Position 211–218 (211–218) interacts with ATP; it reads GDRQTGKT.

This sequence belongs to the ATPase alpha/beta chains family. F-type ATPases have 2 components, CF(1) - the catalytic core - and CF(0) - the membrane proton channel. CF(1) has five subunits: alpha(3), beta(3), gamma(1), delta(1), epsilon(1). CF(0) has three main subunits: a, b and c.

It localises to the mitochondrion inner membrane. Mitochondrial membrane ATP synthase (F(1)F(0) ATP synthase or Complex V) produces ATP from ADP in the presence of a proton gradient across the membrane which is generated by electron transport complexes of the respiratory chain. F-type ATPases consist of two structural domains, F(1) - containing the extramembraneous catalytic core, and F(0) - containing the membrane proton channel, linked together by a central stalk and a peripheral stalk. During catalysis, ATP synthesis in the catalytic domain of F(1) is coupled via a rotary mechanism of the central stalk subunits to proton translocation. Subunits alpha and beta form the catalytic core in F(1). Rotation of the central stalk against the surrounding alpha(3)beta(3) subunits leads to hydrolysis of ATP in three separate catalytic sites on the beta subunits. Subunit alpha does not bear the catalytic high-affinity ATP-binding sites. In Drosophila melanogaster (Fruit fly), this protein is ATP synthase subunit alpha, mitochondrial (blw).